Consider the following 632-residue polypeptide: Lipoma-preferred partner homolog (632 aa).

Disordered stretches follow at residues 1-118 and 135-249; these read MSHP…RSSL and SSPY…RSYN. Polar residues predominate over residues 26–40; sequence THSFGTPSISVSTQQ. Positions 41–53 are enriched in low complexity; it reads PPKKFAPVVAPKP. The residue at position 109 (Lys-109) is an N6-acetyllysine. A phosphoserine mark is found at Ser-117 and Ser-152. The segment covering 144–160 has biased composition (low complexity); that stretch reads PGSSSSIASPPVSTPVT. Composition is skewed to polar residues over residues 172–182 and 206–239; these read PLTATKKSATK and SYST…SSGQ. Tyr-241 is modified (phosphotyrosine). Residue Arg-246 is modified to Omega-N-methylarginine. Lys-324 is covalently cross-linked (Glycyl lysine isopeptide (Lys-Gly) (interchain with G-Cter in SUMO1)). LIM zinc-binding domains follow at residues 434 to 493, 494 to 554, and 555 to 623; these read GRCA…INTL, EQCS…KFAP, and RCSV…RIRV.

It belongs to the zyxin/ajuba family. Interacts with PDZ domains of SCRIB, with VASP and with ACTN1/alpha-actinin.

Its subcellular location is the nucleus. The protein localises to the cytoplasm. It localises to the cell junction. In terms of biological role, may play a structural role at sites of cell adhesion in maintaining cell shape and motility. In addition to these structural functions, it may also be implicated in signaling events and activation of gene transcription. May be involved in signal transduction from cell adhesion sites to the nucleus allowing successful integration of signals arising from soluble factors and cell-cell adhesion. Also suggested to serve as a scaffold protein upon which distinct protein complexes are assembled in the cytoplasm and in the nucleus. This is Lipoma-preferred partner homolog (Lpp) from Rattus norvegicus (Rat).